Here is a 335-residue protein sequence, read N- to C-terminus: Putative T-box protein 7 (335 aa).

A DNA-binding region (T-box) is located at residues L73 to N246.

Its subcellular location is the nucleus. The polypeptide is Putative T-box protein 7 (Caenorhabditis elegans).